Reading from the N-terminus, the 354-residue chain is Cyclin-D1-2 (354 aa).

2 disordered regions span residues 37-74 and 331-354; these read FFQQLQGPAPAVSSSPSTTTATAPAAAGSCDDGGEEEE and TTATTAVSSEEVVSSSPPSKRRKM. Composition is skewed to low complexity over residues 44-66 and 331-346; these read PAPAVSSSPSTTTATAPAAAGSC and TTATTAVSSEEVVSSS.

It belongs to the cyclin family. Cyclin D subfamily.

The protein is Cyclin-D1-2 (CYCD1-2) of Oryza sativa subsp. japonica (Rice).